Consider the following 352-residue polypeptide: uncharacterized protein (352 aa).

Positions 1 to 40 (MTSTMKLFTDHAEISVRERPPQRNNNNQEQDNSNRPAPRR) are disordered. Over residues 8–21 (FTDHAEISVRERPP) the composition is skewed to basic and acidic residues. Over residues 22–36 (QRNNNNQEQDNSNRP) the composition is skewed to low complexity. A helical transmembrane segment spans residues 317–333 (MTITLPCGLTIAFFVYY).

It is found in the host cell membrane. This is an uncharacterized protein from Diadromus pulchellus idnoreovirus 1 (DpIRV-1).